The primary structure comprises 125 residues: MKLIDTTIAVDHLRGEPAAAVLLAELINNGEEIAASELVRFELLAGVRESELAALEAFFSAVVWTLVTEDIARIGGRLARRYRSSHRGIDDVDYLIAATAIVVDADLLTTNVRHFPMFPDLQPPY.

The PINc domain maps to 3–122 (LIDTTIAVDH…RHFPMFPDLQ (120 aa)). 2 residues coordinate Mg(2+): D5 and D93.

This sequence belongs to the PINc/VapC protein family. It depends on Mg(2+) as a cofactor.

Functionally, toxic component of a type II toxin-antitoxin (TA) system. An RNase. Its toxic effect is neutralized by coexpression with cognate antitoxin VapB19. This chain is Ribonuclease VapC19, found in Mycobacterium tuberculosis (strain CDC 1551 / Oshkosh).